Reading from the N-terminus, the 152-residue chain is Transcriptional regulator MraZ (152 aa).

SpoVT-AbrB domains lie at 5–52 (AQAI…PLKE) and 81–124 (ATEC…SETE).

Belongs to the MraZ family. Forms oligomers.

It is found in the cytoplasm. The protein localises to the nucleoid. In Mannheimia succiniciproducens (strain KCTC 0769BP / MBEL55E), this protein is Transcriptional regulator MraZ.